The primary structure comprises 259 residues: Tryptophan synthase alpha chain (259 aa).

Active-site proton acceptor residues include glutamate 48 and aspartate 59.

The protein belongs to the TrpA family. As to quaternary structure, tetramer of two alpha and two beta chains.

The catalysed reaction is (1S,2R)-1-C-(indol-3-yl)glycerol 3-phosphate + L-serine = D-glyceraldehyde 3-phosphate + L-tryptophan + H2O. It functions in the pathway amino-acid biosynthesis; L-tryptophan biosynthesis; L-tryptophan from chorismate: step 5/5. The alpha subunit is responsible for the aldol cleavage of indoleglycerol phosphate to indole and glyceraldehyde 3-phosphate. This Syntrophomonas wolfei subsp. wolfei (strain DSM 2245B / Goettingen) protein is Tryptophan synthase alpha chain.